Consider the following 744-residue polypeptide: MTIKVVPLGAGQDVGRSCVIVTIGNKNIMFDCGMHMGMNDARRFPDFSYISKNGQFTKVIDCVIITHFHLDHCGALPFFTEMCGYDGPIYMTLPTKAICPILLEDYRKITVEKKGETNFFTAQMIKDCMKKVIPVNLHQTIKVDEELSIKAYYAGHVLGAAMFYAKVGDESVVYTGDYNMTPDRHLGSAWIDQVKPDVLITETTYATTIRDSKRGRERDFLKRIHECVEKGGKVLIPVFALGRVQELCILIDSYWEQMNLGHIPIYFSAGLAEKANLYYKLFINWTNQKIKQTFVKRNMFDFKHIKPFQSHLVDAPGAMVLFATPGMLHAGASLEVFKKWAPNELNMTIIPGYCVVGTVGNKLLTTGSDQQQQSKPQSQMVEIDKKTTIEVKCKIHNLSFSAHADAKGILQLIKMSNPRNVILVHGEKEKMGFLSQKIIKEMGVNCYYPANGVTIIIDTMKSIPIDISLNLLKRQILDYSYQYNNNNLNNFNNFNNLNNLNNNNNNNNNNSLKLIDIKNNTSTLFINNNNNNKKKQQSVVVVEESEENQDNNLIEEESFISSNNLLKKARLPISTIPIQGLMVSKQDQSSSSSNSNQLKLLGMNEVSKELSIKEIEMQYSLNLNFNNNTSDDNNNNNNNNNNNNNNNNNNNNNNNNNNNNNNNNNNNNNDNISLNFEFLTNELQRLLPIGINIERLEDSFFKPISLKIKSVSIQHISNMNIVVKWLHKDENLATHIISILKSIN.

Zn(2+) is bound by residues His67, His69, Asp71, His72, His156, and Asp177. Residues 67–72 (HFHLDH) carry the HXHXDH motif motif. Glu202 is a catalytic residue. Residue His425 coordinates Zn(2+). A disordered region spans residues 626–669 (NNNTSDDNNNNNNNNNNNNNNNNNNNNNNNNNNNNNNNNNNNNN).

It belongs to the metallo-beta-lactamase superfamily. RNA-metabolizing metallo-beta-lactamase-like family. INTS11 subfamily. As to quaternary structure, component of the Integrator complex. The core complex associates with protein phosphatase 2A subunits, to form the Integrator-PP2A (INTAC) complex. The cofactor is Zn(2+).

Its subcellular location is the nucleus. The protein resides in the cytoplasm. Its function is as follows. RNA endonuclease component of the integrator complex, a multiprotein complex that terminates RNA polymerase II (Pol II) transcription in the promoter-proximal region of genes. The integrator complex provides a quality checkpoint during transcription elongation by driving premature transcription termination of transcripts that are unfavorably configured for transcriptional elongation: the complex terminates transcription by (1) catalyzing dephosphorylation of the C-terminal domain (CTD) of Pol II subunit polr2a, (2) degrading the exiting nascent RNA transcript via endonuclease activity and (3) promoting the release of Pol II from bound DNA. The integrator complex is also involved in terminating the synthesis of non-coding Pol II transcripts, such as enhancer RNAs (eRNAs), small nuclear RNAs (snRNAs), telomerase RNAs and long non-coding RNAs (lncRNAs). Within the integrator complex, INTS11 constitutes the RNA endonuclease subunit that degrades exiting nascent RNA transcripts. The sequence is that of Integrator complex subunit 11 homolog (ints11) from Dictyostelium discoideum (Social amoeba).